The chain runs to 2291 residues: Protein Ycf2 (2291 aa).

1645–1652 (GSIGTGRS) is a binding site for ATP.

This sequence belongs to the Ycf2 family.

Its subcellular location is the plastid. It is found in the chloroplast stroma. Its function is as follows. Probable ATPase of unknown function. Its presence in a non-photosynthetic plant (Epifagus virginiana) and experiments in tobacco indicate that it has an essential function which is probably not related to photosynthesis. The chain is Protein Ycf2 from Olimarabidopsis pumila (Dwarf rocket).